Reading from the N-terminus, the 115-residue chain is NADH-ubiquinone oxidoreductase chain 3 (115 aa).

Transmembrane regions (helical) follow at residues 4–24 (LLAMLINITLSLLLISIAFWL), 55–75 (FFLVAITFLLFDLEIALLLPI), and 87–107 (MMLTAFILVTILALGLAYEWI).

It belongs to the complex I subunit 3 family. In terms of assembly, core subunit of respiratory chain NADH dehydrogenase (Complex I) which is composed of 45 different subunits. Interacts with TMEM186. Interacts with TMEM242.

It localises to the mitochondrion inner membrane. The catalysed reaction is a ubiquinone + NADH + 5 H(+)(in) = a ubiquinol + NAD(+) + 4 H(+)(out). In terms of biological role, core subunit of the mitochondrial membrane respiratory chain NADH dehydrogenase (Complex I) which catalyzes electron transfer from NADH through the respiratory chain, using ubiquinone as an electron acceptor. Essential for the catalytic activity of complex I. This Neotoma floridana (Eastern woodrat) protein is NADH-ubiquinone oxidoreductase chain 3.